Consider the following 207-residue polypeptide: N-(5'-phosphoribosyl)anthranilate isomerase (207 aa).

It belongs to the TrpF family.

The enzyme catalyses N-(5-phospho-beta-D-ribosyl)anthranilate = 1-(2-carboxyphenylamino)-1-deoxy-D-ribulose 5-phosphate. The protein operates within amino-acid biosynthesis; L-tryptophan biosynthesis; L-tryptophan from chorismate: step 3/5. The polypeptide is N-(5'-phosphoribosyl)anthranilate isomerase (Halorhodospira halophila (strain DSM 244 / SL1) (Ectothiorhodospira halophila (strain DSM 244 / SL1))).